Consider the following 556-residue polypeptide: 2-succinyl-5-enolpyruvyl-6-hydroxy-3-cyclohexene-1-carboxylate synthase (556 aa).

This sequence belongs to the TPP enzyme family. MenD subfamily. As to quaternary structure, homodimer. The cofactor is Mg(2+). Requires Mn(2+) as cofactor. It depends on thiamine diphosphate as a cofactor.

The catalysed reaction is isochorismate + 2-oxoglutarate + H(+) = 5-enolpyruvoyl-6-hydroxy-2-succinyl-cyclohex-3-ene-1-carboxylate + CO2. The protein operates within quinol/quinone metabolism; 1,4-dihydroxy-2-naphthoate biosynthesis; 1,4-dihydroxy-2-naphthoate from chorismate: step 2/7. Its pathway is quinol/quinone metabolism; menaquinone biosynthesis. Its function is as follows. Catalyzes the thiamine diphosphate-dependent decarboxylation of 2-oxoglutarate and the subsequent addition of the resulting succinic semialdehyde-thiamine pyrophosphate anion to isochorismate to yield 2-succinyl-5-enolpyruvyl-6-hydroxy-3-cyclohexene-1-carboxylate (SEPHCHC). In Salmonella choleraesuis (strain SC-B67), this protein is 2-succinyl-5-enolpyruvyl-6-hydroxy-3-cyclohexene-1-carboxylate synthase.